The following is a 1005-amino-acid chain: Band 4.1-like protein 2 (1005 aa).

The disordered stretch occupies residues 1–80; the sequence is MTTEVGSVSE…SRGISRFIPP (80 aa). At threonine 2 the chain carries N-acetylthreonine. Serine 7 bears the Phosphoserine mark. The span at 22–31 shows a compositional bias: basic and acidic residues; that stretch reads ATKEKPKEVA. Phosphoserine occurs at positions 39, 58, and 87. Threonine 89 bears the Phosphothreonine mark. Residues 93 to 196 are disordered; that stretch reads AKDGGDKKEP…GGAAKRETKE (104 aa). Basic and acidic residues-rich tracts occupy residues 111-157 and 169-196; these read VLDK…EKPS and VSKE…ETKE. Glycyl lysine isopeptide (Lys-Gly) (interchain with G-Cter in SUMO2) cross-links involve residues lysine 140 and lysine 144. Residues serine 170, serine 208, serine 386, serine 402, serine 499, serine 550, serine 562, serine 575, serine 598, and serine 614 each carry the phosphoserine modification. Residues 218–499 enclose the FERM domain; that stretch reads VQCKVTLLDG…EHHTFYRLVS (282 aa). The hydrophilic stretch occupies residues 502 to 610; sequence QPPKAKFLTL…KAPHLQLIEG (109 aa). The segment at 611 to 676 is spectrin--actin-binding; that stretch reads KKNSLRVEGD…WEKRRITPLS (66 aa). Position 623 is a phosphotyrosine (tyrosine 623). Serine 627 and serine 647 each carry phosphoserine. The tract at residues 652–800 is disordered; the sequence is KRNFMESTPE…EEAVPEASPV (149 aa). Residues 675–686 show a composition bias toward polar residues; sequence LSLQTQGSSHET. Basic and acidic residues predominate over residues 690 to 711; sequence VEEKKRAEVGKDERVITEEMNG. Serine 715 and serine 718 each carry phosphoserine. A compositionally biased stretch (low complexity) spans 734–746; that stretch reads STSLSSESSSSSS. Composition is skewed to basic and acidic residues over residues 754 to 770 and 780 to 793; these read GEYR…IREE and EPRP…REEA. At threonine 763 the chain carries Phosphothreonine. A Phosphoserine modification is found at serine 828. A C-terminal (CTD) region spans residues 855 to 1005; it reads HVDIDVLPQI…ETELAEEGED (151 aa).

In terms of assembly, interacts with FCGR1A. Interacts with TRPC4. Interacts (via CTD domain) with FKBP2. Interacts with NUMA1; this interaction is negatively regulated by CDK1 during metaphase and promotes anaphase-specific localization of NUMA1 in symmetrically dividing cells. As to expression, widely expressed.

Its subcellular location is the cytoplasm. It is found in the cytoskeleton. It localises to the cell cortex. The protein resides in the cell membrane. Functionally, required for dynein-dynactin complex and NUMA1 recruitment at the mitotic cell cortex during anaphase. The polypeptide is Band 4.1-like protein 2 (Homo sapiens (Human)).